We begin with the raw amino-acid sequence, 354 residues long: FAD synthetase 1, chloroplastic (354 aa).

A chloroplast-targeting transit peptide spans 1–75; sequence MLCGGSRASV…SQGDDHPELS (75 aa). Residues 228 to 248 form a disordered region; it reads SVNTEEEDSKSKERGQVSSTR.

Mg(2+) serves as cofactor.

The protein resides in the plastid. It localises to the chloroplast. It carries out the reaction FMN + ATP + H(+) = FAD + diphosphate. It functions in the pathway cofactor biosynthesis; FAD biosynthesis; FAD from FMN: step 1/1. Its function is as follows. Catalyzes the adenylation of flavin mononucleotide (FMN) to form flavin adenine dinucleotide (FAD) coenzyme. The protein is FAD synthetase 1, chloroplastic of Arabidopsis thaliana (Mouse-ear cress).